Consider the following 142-residue polypeptide: MKTFSAKGHEVQRDWFVIDATDKVLGRVASEVALRLRGKHKPEFTPHVDTGDFIVVVNAGKLRVTGTKATDKTYYRHSGYPGGIYETNFKKMQERFPGRALEKAVKGMLPKGPLGYAMIKKLKVYAEETHPHAAQQPKALEL.

The protein belongs to the universal ribosomal protein uL13 family. As to quaternary structure, part of the 50S ribosomal subunit.

In terms of biological role, this protein is one of the early assembly proteins of the 50S ribosomal subunit, although it is not seen to bind rRNA by itself. It is important during the early stages of 50S assembly. This chain is Large ribosomal subunit protein uL13, found in Herminiimonas arsenicoxydans.